Reading from the N-terminus, the 424-residue chain is MTSSNLIKQLQERGLVAQVTDEDALAERLAQGPISLYCGFDPTADSLHLGHLVPLLCLKRFQLAGHRPVALVGGATGMIGDPSFKASERKLNTEDTVNEWVEKIRHQVSPFLDFDCGENSAIAANNYDWFGGMNVLTFLRDIGKHFSVNQMINKEAVKQRLNRDDSGISFTEFSYNLLQAYDFACLNKNHGVALQIGGSDQWGNITSGIDLTRRLHQQQVYGLTVPLITKADGTKFGKTEGGAVWLDPKKTSPYKFYQFWINTADADVYRFLKFFTFMSLEEINALEEEDKNSGKAPRAQYVLAENVTGMVHGPEGLAAAKRITDSLFSGDLHDMTEADFAQLAQDGMPTVELNRDADLQQALVNAELVPSRGQARTMIGSNAVAINGEKQADPEYVFTDADRLFGRYTLLRRGKKHYCLISWL.

An L-tyrosine-binding site is contributed by Tyr37. A 'HIGH' region motif is present at residues 42 to 51 (PTADSLHLGH). L-tyrosine-binding residues include Tyr175 and Gln179. Positions 235–239 (KFGKT) match the 'KMSKS' region motif. ATP is bound at residue Lys238. The region spanning 357 to 414 (ADLQQALVNAELVPSRGQARTMIGSNAVAINGEKQADPEYVFTDADRLFGRYTLLRRG) is the S4 RNA-binding domain.

Belongs to the class-I aminoacyl-tRNA synthetase family. TyrS type 1 subfamily. Homodimer.

It is found in the cytoplasm. It catalyses the reaction tRNA(Tyr) + L-tyrosine + ATP = L-tyrosyl-tRNA(Tyr) + AMP + diphosphate + H(+). In terms of biological role, catalyzes the attachment of tyrosine to tRNA(Tyr) in a two-step reaction: tyrosine is first activated by ATP to form Tyr-AMP and then transferred to the acceptor end of tRNA(Tyr). The protein is Tyrosine--tRNA ligase of Yersinia pestis bv. Antiqua (strain Antiqua).